Here is a 235-residue protein sequence, read N- to C-terminus: 7-cyano-7-deazaguanine synthase (235 aa).

An ATP-binding site is contributed by 12–22 (FSGGQDSTACL). Cys-200, Cys-215, Cys-218, and Cys-221 together coordinate Zn(2+).

The protein belongs to the QueC family. Requires Zn(2+) as cofactor.

It carries out the reaction 7-carboxy-7-deazaguanine + NH4(+) + ATP = 7-cyano-7-deazaguanine + ADP + phosphate + H2O + H(+). The protein operates within purine metabolism; 7-cyano-7-deazaguanine biosynthesis. Catalyzes the ATP-dependent conversion of 7-carboxy-7-deazaguanine (CDG) to 7-cyano-7-deazaguanine (preQ(0)). The chain is 7-cyano-7-deazaguanine synthase from Methylibium petroleiphilum (strain ATCC BAA-1232 / LMG 22953 / PM1).